The primary structure comprises 147 residues: Hemoglobin subunit gamma (147 aa).

The Globin domain occupies 3–147; the sequence is HFTAEEKAII…VAIALGHKYH (145 aa). Residues H64 and H93 each coordinate heme b.

This sequence belongs to the globin family. As to quaternary structure, heterotetramer of two alpha chains and two gamma chains in fetal hemoglobin (Hb F). In terms of tissue distribution, red blood cells.

Gamma chains make up the fetal hemoglobin F, in combination with alpha chains. The protein is Hemoglobin subunit gamma (HBG) of Cephalopachus bancanus (Western tarsier).